The following is a 343-amino-acid chain: tRNA N6-adenosine threonylcarbamoyltransferase (343 aa).

Fe cation-binding residues include histidine 120 and histidine 124. Substrate is bound by residues 142-146 (VVSGG), aspartate 175, glycine 188, aspartate 192, and asparagine 281. Residue aspartate 310 participates in Fe cation binding.

It belongs to the KAE1 / TsaD family. Fe(2+) serves as cofactor.

The protein resides in the cytoplasm. It catalyses the reaction L-threonylcarbamoyladenylate + adenosine(37) in tRNA = N(6)-L-threonylcarbamoyladenosine(37) in tRNA + AMP + H(+). In terms of biological role, required for the formation of a threonylcarbamoyl group on adenosine at position 37 (t(6)A37) in tRNAs that read codons beginning with adenine. Is involved in the transfer of the threonylcarbamoyl moiety of threonylcarbamoyl-AMP (TC-AMP) to the N6 group of A37, together with TsaE and TsaB. TsaD likely plays a direct catalytic role in this reaction. This Bacillus anthracis protein is tRNA N6-adenosine threonylcarbamoyltransferase.